We begin with the raw amino-acid sequence, 50 residues long: Conotoxin Cal6.19 (50 aa).

A signal peptide spans 1 to 22 (MKVTCVLVLTLMALTVCQVATA). Cystine bridges form between Cys24/Cys37, Cys30/Cys41, and Cys36/Cys46.

Expressed by the venom duct.

Its subcellular location is the secreted. Functionally, probable neurotoxin. This Californiconus californicus (California cone) protein is Conotoxin Cal6.19.